The chain runs to 926 residues: Disease resistance protein RPM1 (926 aa).

Positions 10–45 (IGRILSVLENETLLLSGVHGEIDKMKKELLIMKSFL) are leucine-zipper. Residues 153–467 (DAKWVNNISE…AQRFVEPIRG (315 aa)) form the NB-ARC domain. 200-207 (GMGGSGKT) is an ATP binding site. LRR repeat units lie at residues 561–580 (LHSLLVCSSAKHKMELLPSL), 581–603 (NLLRALDLEDSSISKLPDCLVTM), 605–625 (NLKYLNLSKTQVKELPKNFHK), 626–649 (LVNLETLNTKHSKIEELPLGMWKL), 686–707 (LQVMDCFNAEDELIKNLGCMTQ), 708–731 (LTRISLVMVRREHGRDLCDSLNKI), 756–777 (TASIEKLFLAGKLERVPSWFNT), 778–804 (LQNLTYLGLRGSQLQENAILSIQTLPR), 825–836 (FQNLKILEIVQM), 837–859 (KHLTEVVIEDGAMFELQKLYVRA), and 876–900 (LQELHLIHVSNQLVERIRGEGSVDR).

This sequence belongs to the disease resistance NB-LRR family. In terms of assembly, interacts directly with RIN4 via its N-terminal region. Interacts (via N-terminus) with RIN2 and RIN3 (via C-terminus). Interacts with TIP49A, a protein known to interact with the TATA binding protein complex (TBP). Binds to MORC1/CRT1. Interacts, via its NB-ARC domain, with RIN13.

It localises to the endomembrane system. The protein localises to the cell membrane. In terms of biological role, disease resistance (R) protein that specifically recognizes the AvrRpm1 type III effector avirulence protein from Pseudomonas syringae. Resistance proteins guard the plant against pathogens that contain an appropriate avirulence protein via an indirect interaction with this avirulence protein. That triggers a defense system including the hypersensitive response (HR), which restricts the pathogen growth. Acts via its interaction with RIN4, and probably triggers the plant resistance when RIN4 is phosphorylated by AvrRpm1. It is then degraded at the onset of the hypersensitive response. This is Disease resistance protein RPM1 from Arabidopsis thaliana (Mouse-ear cress).